The following is a 227-amino-acid chain: Mitochondrial cardiolipin hydrolase (227 aa).

Residues methionine 1–lysine 14 lie on the Mitochondrial intermembrane side of the membrane. The chain crosses the membrane as a helical span at residues valine 15–leucine 33. At threonine 34–lysine 227 the chain is on the cytoplasmic side. The PLD phosphodiesterase domain occupies serine 153–alanine 180. Residues histidine 158, lysine 160, and aspartate 165 contribute to the active site.

This sequence belongs to the phospholipase D family. MitoPLD/Zucchini subfamily. In terms of assembly, homodimer.

Its subcellular location is the mitochondrion outer membrane. It catalyses the reaction a cardiolipin + H2O = a 1,2-diacyl-sn-glycero-3-phospho-(1'-sn-glycerol) + a 1,2-diacyl-sn-glycero-3-phosphate + H(+). Functionally, presents phospholipase and nuclease activities, depending on the different physiological conditions. Plays a key role in mitochondrial fusion and fission via its phospholipase activity. In its phospholipase role, it uses the mitochondrial lipid cardiolipin as substrate to generate phosphatidate (PA or 1,2-diacyl-sn-glycero-3-phosphate), a second messenger signaling lipid. Production of PA facilitates Mitofusin-mediated fusion, whereas the cleavage of PA by the Lipin family of phosphatases produces diacylgycerol (DAG) which promotes mitochondrial fission. Regulates mitochondrial shape through facilitating mitochondrial fusion. During spermatogenesis, plays a critical role in PIWI-interacting RNA (piRNA) biogenesis. piRNAs provide essential protection against the activity of mobile genetic elements. piRNA-mediated transposon silencing is thus critical for maintaining genome stability, in particular in germline cells when transposons are mobilized as a consequence of wide-spread genomic demethylation. Has been shown to be a backbone-non-specific, single strand-specific nuclease, cleaving either RNA or DNA substrates with similar affinity. Produces 5' phosphate and 3' hydroxyl termini, suggesting it could directly participate in the processing of primary piRNA transcripts. Has been proposed to act as a cardiolipin hydrolase to generate phosphatidic acid at mitochondrial surface. Although it cannot be excluded that it can act as a phospholipase in some circumstances, this activity could not be confirmed. The sequence is that of Mitochondrial cardiolipin hydrolase (pld6) from Danio rerio (Zebrafish).